Reading from the N-terminus, the 682-residue chain is Potassium-transporting ATPase ATP-binding subunit (682 aa).

4 helical membrane-spanning segments follow: residues 34–54 (PVMF…IAMA), 62–82 (ALFS…ANFA), 219–239 (IALT…TATL), and 254–274 (VLVA…LSAI). D307 serves as the catalytic 4-aspartylphosphate intermediate. Residues D344, E348, 377-384 (FTAQSRMS), and K395 each bind ATP. Mg(2+)-binding residues include D518 and D522. 3 helical membrane passes run 588–608 (FAII…LNIM), 616–636 (AILS…PLAL), and 656–676 (IYGL…DLLL).

This sequence belongs to the cation transport ATPase (P-type) (TC 3.A.3) family. Type IA subfamily. The system is composed of three essential subunits: KdpA, KdpB and KdpC.

It localises to the cell inner membrane. It carries out the reaction K(+)(out) + ATP + H2O = K(+)(in) + ADP + phosphate + H(+). Functionally, part of the high-affinity ATP-driven potassium transport (or Kdp) system, which catalyzes the hydrolysis of ATP coupled with the electrogenic transport of potassium into the cytoplasm. This subunit is responsible for energy coupling to the transport system and for the release of the potassium ions to the cytoplasm. This Escherichia fergusonii (strain ATCC 35469 / DSM 13698 / CCUG 18766 / IAM 14443 / JCM 21226 / LMG 7866 / NBRC 102419 / NCTC 12128 / CDC 0568-73) protein is Potassium-transporting ATPase ATP-binding subunit.